Here is a 332-residue protein sequence, read N- to C-terminus: tRNA N6-adenosine threonylcarbamoyltransferase (332 aa).

Fe cation-binding residues include His-107 and His-111. Substrate is bound by residues 129 to 133 (LVSGG), Asp-162, Gly-175, and Asn-267. A Fe cation-binding site is contributed by Asp-295.

It belongs to the KAE1 / TsaD family. Fe(2+) serves as cofactor.

Its subcellular location is the cytoplasm. It carries out the reaction L-threonylcarbamoyladenylate + adenosine(37) in tRNA = N(6)-L-threonylcarbamoyladenosine(37) in tRNA + AMP + H(+). In terms of biological role, required for the formation of a threonylcarbamoyl group on adenosine at position 37 (t(6)A37) in tRNAs that read codons beginning with adenine. Is involved in the transfer of the threonylcarbamoyl moiety of threonylcarbamoyl-AMP (TC-AMP) to the N6 group of A37, together with TsaE and TsaB. TsaD likely plays a direct catalytic role in this reaction. The sequence is that of tRNA N6-adenosine threonylcarbamoyltransferase from Campylobacter hominis (strain ATCC BAA-381 / DSM 21671 / CCUG 45161 / LMG 19568 / NCTC 13146 / CH001A).